Reading from the N-terminus, the 118-residue chain is HTH-type transcriptional regulator SarT (118 aa).

Residues 55 to 78 (MRDIISYIGIDQSRIVKSVKDLSK) constitute a DNA-binding region (H-T-H motif).

It belongs to the SarA family.

It is found in the cytoplasm. In terms of biological role, transcriptional regulator acting as an intermediary between major regulators sarA and agr and virulence genes. Represses alpha-hemolysin (hla) gene expression. Down-regulates agr RNAIII expression by repressing sarU, a positive activator of agr expression. Up-regulates sarS, which induces the expression of the cell wall-associated protein A (spa). The chain is HTH-type transcriptional regulator SarT (sarT) from Staphylococcus aureus (strain NCTC 8325 / PS 47).